A 458-amino-acid polypeptide reads, in one-letter code: SH2 domain-containing protein 7 (458 aa).

The 92-residue stretch at 51–142 (WFHGFITRKQ…PFGETLAAAC (92 aa)) folds into the SH2 domain. Disordered stretches follow at residues 204–235 (RSVS…SPAG) and 267–326 (AGSL…TLGS). The segment covering 278–288 (PSGKLSDEDQN) has biased composition (basic and acidic residues). The segment covering 304 to 326 (QGSTMPYTSLGFSLPPSSETLGS) has biased composition (polar residues).

The chain is SH2 domain-containing protein 7 (Sh2d7) from Mus musculus (Mouse).